We begin with the raw amino-acid sequence, 303 residues long: Sulfate adenylyltransferase subunit 2 (303 aa).

Positions 281–303 (RQGRVIDHDSSGSMEKKKQEGYF) are disordered.

It belongs to the PAPS reductase family. CysD subfamily. As to quaternary structure, heterodimer composed of CysD, the smaller subunit, and CysN.

The enzyme catalyses sulfate + ATP + H(+) = adenosine 5'-phosphosulfate + diphosphate. Its pathway is sulfur metabolism; hydrogen sulfide biosynthesis; sulfite from sulfate: step 1/3. In terms of biological role, with CysN forms the ATP sulfurylase (ATPS) that catalyzes the adenylation of sulfate producing adenosine 5'-phosphosulfate (APS) and diphosphate, the first enzymatic step in sulfur assimilation pathway. APS synthesis involves the formation of a high-energy phosphoric-sulfuric acid anhydride bond driven by GTP hydrolysis by CysN coupled to ATP hydrolysis by CysD. This chain is Sulfate adenylyltransferase subunit 2, found in Saccharophagus degradans (strain 2-40 / ATCC 43961 / DSM 17024).